Here is a 144-residue protein sequence, read N- to C-terminus: Small ribosomal subunit protein bS16 (144 aa).

The segment at 115 to 144 is disordered; the sequence is NEPVAEAVTPKKKAKKDDAAAESTEAEAAE.

Belongs to the bacterial ribosomal protein bS16 family.

In Nocardia farcinica (strain IFM 10152), this protein is Small ribosomal subunit protein bS16.